The chain runs to 60 residues: Cytotoxin 1 (60 aa).

4 disulfide bridges follow: Cys-3–Cys-21, Cys-14–Cys-38, Cys-42–Cys-53, and Cys-54–Cys-59.

Belongs to the three-finger toxin family. Short-chain subfamily. Type IA cytotoxin sub-subfamily. In terms of assembly, monomer in solution; Homodimer and oligomer in the presence of negatively charged lipids forming a pore with a size ranging between 20 and 30 Angstroms. Expressed by the venom gland.

It localises to the secreted. It is found in the target cell membrane. In terms of biological role, shows cytolytic activity on many different cells by forming pore in lipid membranes. In vivo, increases heart rate or kills the animal by cardiac arrest. In addition, it binds to heparin with high affinity, interacts with Kv channel-interacting protein 1 (KCNIP1) in a calcium-independent manner, and binds to integrin alpha-V/beta-3 (ITGAV/ITGB3) with moderate affinity. In Naja mossambica (Mozambique spitting cobra), this protein is Cytotoxin 1.